The following is a 716-amino-acid chain: Epidermal growth factor receptor kinase substrate 8-like protein 2 (716 aa).

Disordered stretches follow at residues 1–25 (MSQSGTMSCCPGATNGSLGRSDGVA) and 182–243 (PQTL…SQEE). In terms of domain architecture, PID spans 46–202 (MHETSQYHVQ…RQRQSILPPP (157 aa)). Pro residues predominate over residues 199-208 (LPPPQGPAPI). Residues 234–243 (GFRRRESQEE) are compositionally biased toward basic and acidic residues. S240 is modified (phosphoserine). A Phosphothreonine modification is found at T304. A disordered region spans residues 449–488 (VSPVSRQSIRNSQKHSPTSEPTPPGDALPPVSSPHTHRGY). Phosphoserine is present on S450. The span at 452 to 467 (VSRQSIRNSQKHSPTS) shows a compositional bias: polar residues. A Phosphothreonine modification is found at T470. One can recognise an SH3 domain in the interval 493-552 (AMAKYVKILYDFTARNANELSVLKDEVLEVLEDGRQWWKLRSRSGQAGYVPCNILGEARP). S571 carries the phosphoserine modification.

The protein belongs to the EPS8 family. Interacts with ABI1. Part of a complex that contains SOS1, ABI1 and EPS8L2. Associates with F-actin.

It localises to the cytoplasm. The protein localises to the cell projection. The protein resides in the stereocilium. In terms of biological role, stimulates guanine exchange activity of SOS1. May play a role in membrane ruffling and remodeling of the actin cytoskeleton. In the cochlea, is required for stereocilia maintenance in adult hair cells. The chain is Epidermal growth factor receptor kinase substrate 8-like protein 2 (EPS8L2) from Pongo abelii (Sumatran orangutan).